The chain runs to 743 residues: Inhibitor of nuclear factor kappa-B kinase subunit alpha (743 aa).

The region spanning W15–V300 is the Protein kinase domain. ATP-binding positions include L21–V29 and K44. D144 (proton acceptor) is an active-site residue. Positions L453–L474 are leucine-zipper. An NEMO-binding region spans residues L736–L741.

This sequence belongs to the protein kinase superfamily. Ser/Thr protein kinase family. I-kappa-B kinase subfamily.

The protein resides in the cytoplasm. It is found in the nucleus. The catalysed reaction is L-seryl-[I-kappa-B protein] + ATP = O-phospho-L-seryl-[I-kappa-B protein] + ADP + H(+). Its activity is regulated as follows. Activated when phosphorylated and inactivated when dephosphorylated. In terms of biological role, phosphorylates inhibitors of NF-kappa-B thus leading to the dissociation of the inhibitor/NF-kappa-B complex and ultimately the degradation of the inhibitor. Phosphorylates 'Ser-10' of histone H3 at NF-kappa-B-regulated promoters during inflammatory responses triggered by cytokines. This is Inhibitor of nuclear factor kappa-B kinase subunit alpha (chuk) from Xenopus tropicalis (Western clawed frog).